The following is an 804-amino-acid chain: G-type lectin S-receptor-like serine/threonine-protein kinase LECRK4 (804 aa).

A signal peptide spans 1 to 23 (MAPPLFLLSLQLLVLLSSPSAQA). One can recognise a Bulb-type lectin domain in the interval 24 to 150 (QNISLGTSLT…GGSTISWETF (127 aa)). Residues 24–458 (QNISLGTSLT…DKKLWILGSS (435 aa)) lie on the Extracellular side of the membrane. N-linked (GlcNAc...) asparagine glycosylation is found at Asn-25, Asn-58, Asn-216, Asn-227, Asn-238, and Asn-243. One can recognise an EGF-like; atypical domain in the interval 290-341 (PENICNAQTKVGSGTCGFNSYCMFDGSNNQTSCVCPEQYSFFDEVRKYRGCR). Disulfide bonds link Cys-294/Cys-311, Cys-305/Cys-322, Cys-324/Cys-340, Cys-386/Cys-406, and Cys-390/Cys-396. Asn-318 is a glycosylation site (N-linked (GlcNAc...) asparagine). A PAN domain is found at 349–426 (CDLDEAASMA…IMGSGVQRTV (78 aa)). N-linked (GlcNAc...) asparagine glycosylation is present at Asn-434. The helical transmembrane segment at 459–479 (LLLGGSVIANFALSSVLLFGT) threads the bilayer. The Cytoplasmic portion of the chain corresponds to 480 to 804 (YCTITRKDVQ…DSSSVVNSFP (325 aa)). A Protein kinase domain is found at 514–790 (DGFKEVLGTG…TQMLDGADAI (277 aa)). Residues 520–528 (LGTGASGIV) and Lys-544 each bind ATP. Asp-638 functions as the Proton acceptor in the catalytic mechanism.

Belongs to the protein kinase superfamily. Ser/Thr protein kinase family.

The protein localises to the membrane. The enzyme catalyses L-seryl-[protein] + ATP = O-phospho-L-seryl-[protein] + ADP + H(+). It catalyses the reaction L-threonyl-[protein] + ATP = O-phospho-L-threonyl-[protein] + ADP + H(+). Functionally, does not seem to be involved in resistance against the herbivorous insect brown planthopper (N.lugens, BPH). The protein is G-type lectin S-receptor-like serine/threonine-protein kinase LECRK4 of Oryza sativa subsp. indica (Rice).